Here is a 216-residue protein sequence, read N- to C-terminus: Large ribosomal subunit protein uL3 (216 aa).

Position 157 is an N5-methylglutamine (Gln157).

This sequence belongs to the universal ribosomal protein uL3 family. As to quaternary structure, part of the 50S ribosomal subunit. Forms a cluster with proteins L14 and L19. In terms of processing, methylated by PrmB.

One of the primary rRNA binding proteins, it binds directly near the 3'-end of the 23S rRNA, where it nucleates assembly of the 50S subunit. This is Large ribosomal subunit protein uL3 from Stenotrophomonas maltophilia (strain R551-3).